Consider the following 132-residue polypeptide: Small ribosomal subunit protein uS8 (132 aa).

This sequence belongs to the universal ribosomal protein uS8 family. In terms of assembly, part of the 30S ribosomal subunit. Contacts proteins S5 and S12.

Functionally, one of the primary rRNA binding proteins, it binds directly to 16S rRNA central domain where it helps coordinate assembly of the platform of the 30S subunit. This chain is Small ribosomal subunit protein uS8, found in Geobacillus sp. (strain WCH70).